A 178-amino-acid polypeptide reads, in one-letter code: Inorganic pyrophosphatase (178 aa).

Lys30, Arg44, and Tyr56 together coordinate substrate. Mg(2+)-binding residues include Asp66, Asp71, and Asp103. Tyr142 contacts substrate.

It belongs to the PPase family. Homohexamer. Mg(2+) serves as cofactor.

It localises to the cytoplasm. The catalysed reaction is diphosphate + H2O = 2 phosphate + H(+). Its function is as follows. Catalyzes the hydrolysis of inorganic pyrophosphate (PPi) forming two phosphate ions. The protein is Inorganic pyrophosphatase of Xanthomonas axonopodis pv. citri (strain 306).